The following is a 227-amino-acid chain: MTARPLSELVEQGWAAALEPVVDQVAEMGRFLRAEIAAGRRYLPAGHSVLRAFTYPFDNVRVLIVGQDPYPTPGHAVGLSFSVAPDVRPLPRSLANVFDEYTADLGYPLPVCGDLTPWAQRGVLLLNRVLTVRPSNPASHRGKGWEVITECAIRALAARSEPMVAILWGRDAATLKPLLTVDNCVVIESPHPSPLSASRGFFGSRPFSRTNEILVGMGAGPINWRLP.

The active-site Proton acceptor is the Asp-68.

It belongs to the uracil-DNA glycosylase (UDG) superfamily. UNG family.

The protein localises to the cytoplasm. The enzyme catalyses Hydrolyzes single-stranded DNA or mismatched double-stranded DNA and polynucleotides, releasing free uracil.. Excises uracil residues from the DNA which can arise as a result of misincorporation of dUMP residues by DNA polymerase or due to deamination of cytosine. The chain is Uracil-DNA glycosylase from Mycobacterium leprae (strain Br4923).